The following is a 704-amino-acid chain: Tetratricopeptide repeat protein 12 (704 aa).

Phosphothreonine is present on threonine 71. TPR repeat units lie at residues alanine 105–methionine 138, lysine 139–cysteine 172, and threonine 173–leucine 206.

The protein resides in the cytoplasm. Cytoplasmic protein that plays a role in the proper assembly of dynein arm complexes in motile cilia in both respiratory cells and sperm flagella. This Mus musculus (Mouse) protein is Tetratricopeptide repeat protein 12 (Ttc12).